Here is a 93-residue protein sequence, read N- to C-terminus: U12-lycotoxin-Ls1a (93 aa).

The first 18 residues, 1-18, serve as a signal peptide directing secretion; sequence MKFAVILLFSLVVLAVAS. A propeptide spanning residues 19 to 38 is cleaved from the precursor; that stretch reads ESVEEVRREIDIEDLPEQQR.

The protein belongs to the neurotoxin 31 family. Contains 5 disulfide bonds. As to expression, expressed by the venom gland.

The protein resides in the secreted. This chain is U12-lycotoxin-Ls1a, found in Lycosa singoriensis (Wolf spider).